The chain runs to 512 residues: Bifunctional purine biosynthesis protein PurH (512 aa).

Positions 1–144 (MKRALVSVSD…KNYHDVTIVV (144 aa)) constitute an MGS-like domain.

Belongs to the PurH family.

It catalyses the reaction (6R)-10-formyltetrahydrofolate + 5-amino-1-(5-phospho-beta-D-ribosyl)imidazole-4-carboxamide = 5-formamido-1-(5-phospho-D-ribosyl)imidazole-4-carboxamide + (6S)-5,6,7,8-tetrahydrofolate. The catalysed reaction is IMP + H2O = 5-formamido-1-(5-phospho-D-ribosyl)imidazole-4-carboxamide. It participates in purine metabolism; IMP biosynthesis via de novo pathway; 5-formamido-1-(5-phospho-D-ribosyl)imidazole-4-carboxamide from 5-amino-1-(5-phospho-D-ribosyl)imidazole-4-carboxamide (10-formyl THF route): step 1/1. It functions in the pathway purine metabolism; IMP biosynthesis via de novo pathway; IMP from 5-formamido-1-(5-phospho-D-ribosyl)imidazole-4-carboxamide: step 1/1. In Limosilactobacillus reuteri (strain DSM 20016) (Lactobacillus reuteri), this protein is Bifunctional purine biosynthesis protein PurH.